The following is a 148-amino-acid chain: Calmodulin-4 (148 aa).

4 consecutive EF-hand domains span residues 8–43 (EEVA…LGKN), 44–79 (LPEK…YKKG), 80–115 (HRAG…LGES), and 116–148 (LSQE…HVEN). Aspartate 21, asparagine 23, aspartate 25, histidine 27, glutamate 32, aspartate 57, aspartate 59, aspartate 61, lysine 63, glutamate 68, aspartate 93, asparagine 95, aspartate 97, tyrosine 99, and glutamate 104 together coordinate Ca(2+).

Functionally, implicated in the early stage of ectopic ossification. This Mus musculus (Mouse) protein is Calmodulin-4 (Calm4).